Consider the following 150-residue polypeptide: 3-hydroxyacyl-[acyl-carrier-protein] dehydratase FabZ (150 aa).

The active site involves H51.

Belongs to the thioester dehydratase family. FabZ subfamily.

Its subcellular location is the cytoplasm. The enzyme catalyses a (3R)-hydroxyacyl-[ACP] = a (2E)-enoyl-[ACP] + H2O. Its function is as follows. Involved in unsaturated fatty acids biosynthesis. Catalyzes the dehydration of short chain beta-hydroxyacyl-ACPs and long chain saturated and unsaturated beta-hydroxyacyl-ACPs. The protein is 3-hydroxyacyl-[acyl-carrier-protein] dehydratase FabZ of Geobacter sulfurreducens (strain ATCC 51573 / DSM 12127 / PCA).